A 307-amino-acid polypeptide reads, in one-letter code: Leucine-rich repeat-containing protein 59 (307 aa).

Residues 1 to 247 (MARANGRSQN…LAQRQSRLRK (247 aa)) are Cytoplasmic-facing. LRR repeat units follow at residues 10–31 (NLRDKLDGNELDLSLSDLSEVP), 40–61 (KATALDLSCNKLTTLPDDFCNL), 63–84 (HIVRLDLSKNQIVQLPSEFGRL), 86–107 (NLQHLDLLQNHLMSLPVSFAQL), and 109–131 (SLKWLDLKDNPLKPDLAKVAGDC). A coiled-coil region spans residues 156–222 (EIELQRKLQL…LNSNKKAEEE (67 aa)). Residues 170-238 (KKKLEAKQRV…RMATPKEKKL (69 aa)) form a disordered region. Basic and acidic residues-rich tracts occupy residues 174-187 (EAKQRVKEEQEREM) and 194-238 (QQKE…EKKL). A helical transmembrane segment spans residues 248-268 (IACILLFGLLVVLLVVVACRF). Over 269-307 (TDLKAINMCTSVNAIYKETLSALHSNPVLERFLQDPSSQ) the chain is Lumenal.

As to quaternary structure, interacts with SGO1.

It localises to the microsome membrane. Its subcellular location is the endoplasmic reticulum membrane. It is found in the nucleus envelope. In terms of biological role, required for nuclear import of FGF1. In Xenopus laevis (African clawed frog), this protein is Leucine-rich repeat-containing protein 59 (lrrc59).